The primary structure comprises 334 residues: MDIKLISKKKNIEERKQLLSELHASKSVIVEKDEELVCPMCDSKNIIKDYEKAEIVCEDCGCVLQDNLFDVGPEWRAFDHEQRVKRSRVGAPMTYTIHDKGLSTVIDWRNKDSYGKDISADKRAQLYRLRKWQRRIRVSDASERNLAFALSELDRIASKLGLPRNVRENAAVLYRGAVEKGLIRGRSIEGVAAAALYAACRRCKVPRTLDEIAEMSRVDRKEIGRTYRFISRELKIRLAPTSPIDYVPRFASELKLPGEVESKAISILQKAGDKGLTSGRGPTGVAAAAIYIASVLHGTRKTQREVADVAGVTEVTIRNRYKELTEHLDIDVTL.

A TFIIB-type zinc finger spans residues 34-65 (EELVCPMCDSKNIIKDYEKAEIVCEDCGCVLQ). Zn(2+) contacts are provided by cysteine 38, cysteine 41, cysteine 57, and cysteine 60. 2 tandem repeats follow at residues 151–234 (SELD…SREL) and 245–326 (DYVP…ELTE).

This sequence belongs to the TFIIB family.

In terms of biological role, stabilizes TBP binding to an archaeal box-A promoter. Also responsible for recruiting RNA polymerase II to the pre-initiation complex (DNA-TBP-TFIIB). In Methanococcus aeolicus (strain ATCC BAA-1280 / DSM 17508 / OCM 812 / Nankai-3), this protein is Transcription initiation factor IIB.